The chain runs to 92 residues: Small ribosomal subunit protein uS19 (92 aa).

Belongs to the universal ribosomal protein uS19 family.

In terms of biological role, protein S19 forms a complex with S13 that binds strongly to the 16S ribosomal RNA. The sequence is that of Small ribosomal subunit protein uS19 from Rhodopseudomonas palustris (strain BisB18).